A 398-amino-acid chain; its full sequence is Carbamoyl phosphate synthase small chain (398 aa).

The tract at residues 1–207 (MIQTISSSRP…KGYGTNNVHN (207 aa)) is CPSase. Serine 60, glycine 257, and glycine 259 together coordinate L-glutamine. The region spanning 209–397 (HIVAIDYGIK…CDLIMNHKKI (189 aa)) is the Glutamine amidotransferase type-1 domain. Cysteine 286 functions as the Nucleophile in the catalytic mechanism. Residues leucine 287, glutamine 290, asparagine 328, glycine 330, and phenylalanine 331 each contribute to the L-glutamine site. Residues histidine 370 and glutamate 372 contribute to the active site.

This sequence belongs to the CarA family. As to quaternary structure, composed of two chains; the small (or glutamine) chain promotes the hydrolysis of glutamine to ammonia, which is used by the large (or ammonia) chain to synthesize carbamoyl phosphate. Tetramer of heterodimers (alpha,beta)4.

The catalysed reaction is hydrogencarbonate + L-glutamine + 2 ATP + H2O = carbamoyl phosphate + L-glutamate + 2 ADP + phosphate + 2 H(+). It carries out the reaction L-glutamine + H2O = L-glutamate + NH4(+). Its pathway is amino-acid biosynthesis; L-arginine biosynthesis; carbamoyl phosphate from bicarbonate: step 1/1. It participates in pyrimidine metabolism; UMP biosynthesis via de novo pathway; (S)-dihydroorotate from bicarbonate: step 1/3. Its function is as follows. Small subunit of the glutamine-dependent carbamoyl phosphate synthetase (CPSase). CPSase catalyzes the formation of carbamoyl phosphate from the ammonia moiety of glutamine, carbonate, and phosphate donated by ATP, constituting the first step of 2 biosynthetic pathways, one leading to arginine and/or urea and the other to pyrimidine nucleotides. The small subunit (glutamine amidotransferase) binds and cleaves glutamine to supply the large subunit with the substrate ammonia. This Bartonella tribocorum (strain CIP 105476 / IBS 506) protein is Carbamoyl phosphate synthase small chain.